The sequence spans 197 residues: ATP-dependent Clp protease proteolytic subunit (197 aa).

S98 (nucleophile) is an active-site residue. H123 is an active-site residue.

It belongs to the peptidase S14 family. Fourteen ClpP subunits assemble into 2 heptameric rings which stack back to back to give a disk-like structure with a central cavity, resembling the structure of eukaryotic proteasomes.

It is found in the cytoplasm. The catalysed reaction is Hydrolysis of proteins to small peptides in the presence of ATP and magnesium. alpha-casein is the usual test substrate. In the absence of ATP, only oligopeptides shorter than five residues are hydrolyzed (such as succinyl-Leu-Tyr-|-NHMec, and Leu-Tyr-Leu-|-Tyr-Trp, in which cleavage of the -Tyr-|-Leu- and -Tyr-|-Trp bonds also occurs).. Functionally, cleaves peptides in various proteins in a process that requires ATP hydrolysis. Has a chymotrypsin-like activity. Plays a major role in the degradation of misfolded proteins. The protein is ATP-dependent Clp protease proteolytic subunit of Anaplasma phagocytophilum (strain HZ).